The following is a 218-amino-acid chain: Pyridoxine/pyridoxamine 5'-phosphate oxidase (218 aa).

Substrate is bound by residues arginine 14 to tyrosine 17 and lysine 72. FMN-binding positions include arginine 67–lysine 72, tyrosine 82–threonine 83, arginine 88, lysine 89, and glutamine 111. The substrate site is built by tyrosine 129, arginine 133, and serine 137. FMN-binding positions include glutamine 146–serine 147 and tryptophan 191. Arginine 197–histidine 199 serves as a coordination point for substrate. Residue arginine 201 coordinates FMN.

It belongs to the pyridoxamine 5'-phosphate oxidase family. In terms of assembly, homodimer. It depends on FMN as a cofactor.

The enzyme catalyses pyridoxamine 5'-phosphate + O2 + H2O = pyridoxal 5'-phosphate + H2O2 + NH4(+). It catalyses the reaction pyridoxine 5'-phosphate + O2 = pyridoxal 5'-phosphate + H2O2. It participates in cofactor metabolism; pyridoxal 5'-phosphate salvage; pyridoxal 5'-phosphate from pyridoxamine 5'-phosphate: step 1/1. It functions in the pathway cofactor metabolism; pyridoxal 5'-phosphate salvage; pyridoxal 5'-phosphate from pyridoxine 5'-phosphate: step 1/1. Functionally, catalyzes the oxidation of either pyridoxine 5'-phosphate (PNP) or pyridoxamine 5'-phosphate (PMP) into pyridoxal 5'-phosphate (PLP). The polypeptide is Pyridoxine/pyridoxamine 5'-phosphate oxidase (Escherichia coli O45:K1 (strain S88 / ExPEC)).